The primary structure comprises 51 residues: ATP synthase F(1) complex subunit epsilon, mitochondrial (51 aa).

3 positions are modified to N6-acetyllysine; alternate: lysine 21, lysine 32, and lysine 37. Residues lysine 21, lysine 32, and lysine 37 each carry the N6-succinyllysine; alternate modification. At lysine 44 the chain carries N6-acetyllysine.

It belongs to the eukaryotic ATPase epsilon family. Component of the ATP synthase complex composed at least of ATP5F1A/subunit alpha, ATP5F1B/subunit beta, ATP5MC1/subunit c (homooctomer), MT-ATP6/subunit a, MT-ATP8/subunit 8, ATP5ME/subunit e, ATP5MF/subunit f, ATP5MG/subunit g, ATP5MK/subunit k, ATP5MJ/subunit j, ATP5F1C/subunit gamma, ATP5F1D/subunit delta, ATP5F1E/subunit epsilon, ATP5PF/subunit F6, ATP5PB/subunit b, ATP5PD/subunit d, ATP5PO/subunit OSCP. ATP synthase complex consists of a soluble F(1) head domain (subunits alpha(3) and beta(3)) - the catalytic core - and a membrane F(0) domain - the membrane proton channel (subunits c, a, 8, e, f, g, k and j). These two domains are linked by a central stalk (subunits gamma, delta, and epsilon) rotating inside the F1 region and a stationary peripheral stalk (subunits F6, b, d, and OSCP).

The protein resides in the mitochondrion. It is found in the mitochondrion inner membrane. Subunit epsilon, of the mitochondrial membrane ATP synthase complex (F(1)F(0) ATP synthase or Complex V) that produces ATP from ADP in the presence of a proton gradient across the membrane which is generated by electron transport complexes of the respiratory chain. ATP synthase complex consist of a soluble F(1) head domain - the catalytic core - and a membrane F(1) domain - the membrane proton channel. These two domains are linked by a central stalk rotating inside the F(1) region and a stationary peripheral stalk. During catalysis, ATP synthesis in the catalytic domain of F(1) is coupled via a rotary mechanism of the central stalk subunits to proton translocation. In vivo, can only synthesize ATP although its ATP hydrolase activity can be activated artificially in vitro. May be essential for the assembly of F(1) and may play an important role in the incorporation of the hydrophobic subunit c into the F(1)-c oligomer rotor of the mitochondrial ATP synthase complex. This is ATP synthase F(1) complex subunit epsilon, mitochondrial from Rattus norvegicus (Rat).